The following is a 771-amino-acid chain: Solute carrier family 7 member 14 (771 aa).

The next 6 membrane-spanning stretches (helical) occupy residues 58–78, 83–103, 119–141, 187–207, 216–236, and 251–271; these read LISL…SGLV, AGPG…LSGV, AYTY…NLIL, YPDL…ALGV, VLNV…LFFI, and WSGV…FDII. An N-linked (GlcNAc...) asparagine glycan is attached at asparagine 282. The next 4 helical transmembrane spans lie at 291-311, 336-356, 384-404, and 407-427; these read ASLV…TLMV, FVVA…SLFP, PVVA…LVSL, and LIEM…VCVL. Serine 465, serine 468, serine 475, and serine 488 each carry phosphoserine. Helical transmembrane passes span 565–585, 596–616, 628–648, and 655–675; these read VTIC…FIIF, WAIL…FVIL, MAPC…YLML, and WIRF…YGIW. Asparagine 676 is a glycosylation site (N-linked (GlcNAc...) asparagine). Residues 735-771 form a disordered region; sequence SDAKANSRTSSKAKSKSKHKQNSEALIANDELDCSPE. The segment covering 745–754 has biased composition (basic residues); the sequence is SKAKSKSKHK. Serine 757 and serine 769 each carry phosphoserine.

The protein belongs to the amino acid-polyamine-organocation (APC) superfamily. As to expression, expressed in retina, brain and spinal cord. In the retina, expressed in the inner nuclear layer and photoreceptor layer (at protein level). Expressed in liver, spleen, lung, kidney intestine and brain (at protein level).

The protein resides in the lysosome membrane. It catalyses the reaction 4-aminobutanoate(in) = 4-aminobutanoate(out). Functionally, imports 4-aminobutanoate (GABA) into lysosomes. May act as a GABA sensor that regulates mTORC2-dependent INS signaling and gluconeogenesis. The transport mechanism and substrate selectivity remain to be elucidated. The polypeptide is Solute carrier family 7 member 14 (Mus musculus (Mouse)).